The chain runs to 130 residues: Small ribosomal subunit protein uS8 (130 aa).

This sequence belongs to the universal ribosomal protein uS8 family. As to quaternary structure, part of the 30S ribosomal subunit.

Functionally, one of the primary rRNA binding proteins, it binds directly to 16S rRNA central domain where it helps coordinate assembly of the platform of the 30S subunit. The chain is Small ribosomal subunit protein uS8 from Methanococcus voltae.